The chain runs to 781 residues: 5-methyltetrahydropteroyltriglutamate--homocysteine methyltransferase (781 aa).

Residues 20-23 (RELK) and Lys131 each bind 5-methyltetrahydropteroyltri-L-glutamate. Residues 453-455 (IGS) and Glu506 each bind L-homocysteine. L-methionine-binding positions include 453 to 455 (IGS) and Glu506. 5-methyltetrahydropteroyltri-L-glutamate is bound by residues 537 to 538 (RC) and Trp583. Asp621 is a binding site for L-homocysteine. Asp621 serves as a coordination point for L-methionine. Position 627 (Glu627) interacts with 5-methyltetrahydropteroyltri-L-glutamate. His663, Cys665, and Glu687 together coordinate Zn(2+). His716 serves as the catalytic Proton donor. A Zn(2+)-binding site is contributed by Cys748.

This sequence belongs to the vitamin-B12 independent methionine synthase family. Zn(2+) serves as cofactor.

It carries out the reaction 5-methyltetrahydropteroyltri-L-glutamate + L-homocysteine = tetrahydropteroyltri-L-glutamate + L-methionine. It functions in the pathway amino-acid biosynthesis; L-methionine biosynthesis via de novo pathway; L-methionine from L-homocysteine (MetE route): step 1/1. Functionally, catalyzes the transfer of a methyl group from 5-methyltetrahydrofolate to homocysteine resulting in methionine formation. The sequence is that of 5-methyltetrahydropteroyltriglutamate--homocysteine methyltransferase from Bradyrhizobium diazoefficiens (strain JCM 10833 / BCRC 13528 / IAM 13628 / NBRC 14792 / USDA 110).